The following is a 113-amino-acid chain: T cell receptor alpha variable 8-4 (113 aa).

Residues Met1 to Ala20 form the signal peptide. The Ig-like domain maps to Gln21 to Ser113. A disulfide bond links Cys42 and Cys110. Asn43 carries N-linked (GlcNAc...) asparagine glycosylation.

In terms of assembly, alpha-beta TR is a heterodimer composed of an alpha and beta chain; disulfide-linked. The alpha-beta TR is associated with the transmembrane signaling CD3 coreceptor proteins to form the TR-CD3 (TcR or TCR). The assembly of alpha-beta TR heterodimers with CD3 occurs in the endoplasmic reticulum where a single alpha-beta TR heterodimer associates with one CD3D-CD3E heterodimer, one CD3G-CD3E heterodimer and one CD247 homodimer forming a stable octameric structure. CD3D-CD3E and CD3G-CD3E heterodimers preferentially associate with TR alpha and TR beta chains, respectively. The association of the CD247 homodimer is the last step of TcR assembly in the endoplasmic reticulum and is required for transport to the cell surface.

It is found in the cell membrane. In terms of biological role, v region of the variable domain of T cell receptor (TR) alpha chain that participates in the antigen recognition. Alpha-beta T cell receptors are antigen specific receptors which are essential to the immune response and are present on the cell surface of T lymphocytes. Recognize peptide-major histocompatibility (MH) (pMH) complexes that are displayed by antigen presenting cells (APC), a prerequisite for efficient T cell adaptive immunity against pathogens. Binding of alpha-beta TR to pMH complex initiates TR-CD3 clustering on the cell surface and intracellular activation of LCK that phosphorylates the ITAM motifs of CD3G, CD3D, CD3E and CD247 enabling the recruitment of ZAP70. In turn ZAP70 phosphorylates LAT, which recruits numerous signaling molecules to form the LAT signalosome. The LAT signalosome propagates signal branching to three major signaling pathways, the calcium, the mitogen-activated protein kinase (MAPK) kinase and the nuclear factor-kappa-B (NF-kB) pathways, leading to the mobilization of transcription factors that are critical for gene expression and essential for T cell growth and differentiation. The T cell repertoire is generated in the thymus, by V-(D)-J rearrangement. This repertoire is then shaped by intrathymic selection events to generate a peripheral T cell pool of self-MH restricted, non-autoaggressive T cells. Post-thymic interaction of alpha-beta TR with the pMH complexes shapes TR structural and functional avidity. The sequence is that of T cell receptor alpha variable 8-4 from Homo sapiens (Human).